The following is a 273-amino-acid chain: Alcohol dehydrogenase-related 31 kDa protein (273 aa).

11-34 is a binding site for NAD(+); it reads YVADCGGIALETCKVLMTKNIAKL. Ser-139 is a substrate binding site. Tyr-152 functions as the Proton acceptor in the catalytic mechanism.

It belongs to the short-chain dehydrogenases/reductases (SDR) family.

This chain is Alcohol dehydrogenase-related 31 kDa protein (Adhr), found in Drosophila immigrans (Fruit fly).